Here is a 159-residue protein sequence, read N- to C-terminus: NADH-quinone oxidoreductase subunit B (159 aa).

4 residues coordinate [4Fe-4S] cluster: Cys36, Cys37, Cys102, and Cys132.

Belongs to the complex I 20 kDa subunit family. In terms of assembly, NDH-1 is composed of 14 different subunits. Subunits NuoB, C, D, E, F, and G constitute the peripheral sector of the complex. It depends on [4Fe-4S] cluster as a cofactor.

The protein localises to the cell inner membrane. The enzyme catalyses a quinone + NADH + 5 H(+)(in) = a quinol + NAD(+) + 4 H(+)(out). Functionally, NDH-1 shuttles electrons from NADH, via FMN and iron-sulfur (Fe-S) centers, to quinones in the respiratory chain. Couples the redox reaction to proton translocation (for every two electrons transferred, four hydrogen ions are translocated across the cytoplasmic membrane), and thus conserves the redox energy in a proton gradient. This chain is NADH-quinone oxidoreductase subunit B, found in Delftia acidovorans (strain DSM 14801 / SPH-1).